The primary structure comprises 261 residues: Probable enoyl-CoA hydratase EchA17 (261 aa).

Belongs to the enoyl-CoA hydratase/isomerase family.

It catalyses the reaction a (3S)-3-hydroxyacyl-CoA = a (2E)-enoyl-CoA + H2O. The enzyme catalyses a 4-saturated-(3S)-3-hydroxyacyl-CoA = a (3E)-enoyl-CoA + H2O. Functionally, could possibly oxidize fatty acids using specific components. This Mycobacterium bovis (strain BCG / Pasteur 1173P2) protein is Probable enoyl-CoA hydratase EchA17 (echA17).